A 1182-amino-acid chain; its full sequence is Tyrosine-protein kinase ABL2 (1182 aa).

Disordered stretches follow at residues 1 to 47 (MGQQ…TGFN) and 60 to 80 (EDGF…HRPY). A lipid anchor (N-myristoyl glycine) is attached at glycine 2. Positions 2–106 (GQQVGRVGEA…SKENLLGATE (105 aa)) are CAP. The segment covering 20–30 (RGIRGSSAARP) has biased composition (low complexity). Serine 97 carries the phosphoserine modification. The SH3 domain occupies 107–167 (SDPNLFVALY…PSNYITPVNS (61 aa)). 6 positions are modified to phosphotyrosine: tyrosine 116, tyrosine 161, tyrosine 174, tyrosine 185, tyrosine 218, and tyrosine 231. In terms of domain architecture, SH2 spans 173–263 (WYHGPVSRSA…GLVTTLHYPA (91 aa)). Tyrosine 261 carries the phosphotyrosine; by ABL1 and autocatalysis modification. Tyrosine 272 carries the post-translational modification Phosphotyrosine; by autocatalysis. At serine 275 the chain carries Phosphoserine. One can recognise a Protein kinase domain in the interval 288-539 (ITMKHKLGGG…PSFAETHQAF (252 aa)). Position 294–302 (294–302 (LGGGQYGEV)) interacts with ATP. Phosphotyrosine is present on residues tyrosine 299 and tyrosine 303. ATP is bound by residues lysine 317 and 362–368 (EYMPYGN). Aspartate 409 functions as the Proton acceptor in the catalytic mechanism. The Kinase activation loop signature appears at 427 to 451 (DFGLSRLMTGDTYTAHAGAKFPIKW). Tyrosine 439 bears the Phosphotyrosine; by autocatalysis and SRC-type Tyr-kinases mark. A Phosphotyrosine modification is found at tyrosine 459. Residue tyrosine 568 is modified to Phosphotyrosine; by autocatalysis. The tract at residues 611–641 (IRGAQASSGSPALPRKQRDKSPSSLLEDAKE) is disordered. 3 positions are modified to phosphoserine: serine 620, serine 631, and serine 633. Aspartate 647 carries the phosphotyrosine modification. Residues 654–674 (SSFMKKRNAPTPPKRSSSFRE) are disordered. Serine 655 carries the post-translational modification Phosphoserine. The Nuclear localization signal motif lies at 658–660 (KKR). Alanine 662 and arginine 668 each carry phosphotyrosine. Phosphoserine occurs at positions 669, 670, and 671. A phosphotyrosine mark is found at tyrosine 683 and tyrosine 718. Tyrosine 683 is modified (phosphotyrosine; by autocatalysis). The tract at residues 694–930 (SLQHADGFSF…PVLPTTHNHK (237 aa)) is F-actin-binding. The tract at residues 763–794 (LRAGKPTASDDTSKPFPRSNSTSSMSSGLPEQ) is disordered. Lysine 776 bears the N6-acetyllysine mark. The segment covering 780 to 791 (RSNSTSSMSSGL) has biased composition (polar residues). Serine 783 is subject to Phosphoserine. The residue at position 800 (threonine 800) is a Phosphothreonine. Positions 807 to 823 (RSKLQLERTVSTSSQPE) are enriched in polar residues. The disordered stretch occupies residues 807 to 851 (RSKLQLERTVSTSSQPEENVDRANDMLPKKSEESAAPSRERPKAK). Phosphoserine occurs at positions 817 and 820. Positions 825 to 849 (NVDRANDMLPKKSEESAAPSRERPK) are enriched in basic and acidic residues. Phosphoserine is present on residues serine 915 and serine 936. The tract at residues 964-1024 (HQVTSSGDKD…TSETQEGGKK (61 aa)) is disordered. Over residues 1010–1019 (TAGQSTSETQ) the composition is skewed to polar residues. The F-actin-binding stretch occupies residues 1020 to 1182 (EGGKKAALGA…VQEISDVVQR (163 aa)).

This sequence belongs to the protein kinase superfamily. Tyr protein kinase family. ABL subfamily. As to quaternary structure, interacts with PSMA7. Interacts with CTTN. Found in a complex with ABL1, ABL2, CRK and UNC119; leading to the inhibition of CRK phosphorylation by ABL kinases. The cofactor is Mg(2+). Mn(2+) serves as cofactor. Post-translationally, phosphorylated at Tyr-261 by ABL1 in response to oxidative stress. Phosphorylated by PDGFRB. Polyubiquitinated. Polyubiquitination of ABL2 leads to degradation. As to expression, widely expressed.

The protein localises to the cytoplasm. Its subcellular location is the cytoskeleton. The enzyme catalyses L-tyrosyl-[protein] + ATP = O-phospho-L-tyrosyl-[protein] + ADP + H(+). Its activity is regulated as follows. Stabilized in the inactive form by an association between the SH3 domain and the SH2-TK linker region, interactions of the N-terminal cap, and contributions from an N-terminal myristoyl group and phospholipids. Activated by autophosphorylation as well as by SRC-family kinase-mediated phosphorylation. Activated by RIN1 binding to the SH2 and SH3 domains. Inhibited by imatinib mesylate (Gleevec) which is used for the treatment of chronic myeloid leukemia (CML). Phosphatidylinositol 4,5-bisphosphate (PIP2), a highly abundant phosphoinositide known to regulate cytoskeletal and membrane proteins, inhibits the tyrosine kinase activity. Its function is as follows. Non-receptor tyrosine-protein kinase that plays an ABL1-overlapping role in key processes linked to cell growth and survival such as cytoskeleton remodeling in response to extracellular stimuli, cell motility and adhesion and receptor endocytosis. Coordinates actin remodeling through tyrosine phosphorylation of proteins controlling cytoskeleton dynamics like MYH10 (involved in movement); CTTN (involved in signaling); or TUBA1 and TUBB (microtubule subunits). Binds directly F-actin and regulates actin cytoskeletal structure through its F-actin-bundling activity. Involved in the regulation of cell adhesion and motility through phosphorylation of key regulators of these processes such as CRK, CRKL, DOK1 or ARHGAP35. Adhesion-dependent phosphorylation of ARHGAP35 promotes its association with RASA1, resulting in recruitment of ARHGAP35 to the cell periphery where it inhibits RHO. Phosphorylates multiple receptor tyrosine kinases like PDGFRB and other substrates which are involved in endocytosis regulation such as RIN1. In brain, may regulate neurotransmission by phosphorylating proteins at the synapse. ABL2 also acts as a regulator of multiple pathological signaling cascades during infection. Pathogens can highjack ABL2 kinase signaling to reorganize the host actin cytoskeleton for multiple purposes, like facilitating intracellular movement and host cell exit. Finally, functions as its own regulator through autocatalytic activity as well as through phosphorylation of its inhibitor, ABI1. Positively regulates chemokine-mediated T-cell migration, polarization, and homing to lymph nodes and immune-challenged tissues, potentially via activation of NEDD9/HEF1 and RAP1. The sequence is that of Tyrosine-protein kinase ABL2 (ABL2) from Homo sapiens (Human).